Here is a 778-residue protein sequence, read N- to C-terminus: Serine/threonine-protein kinase BRSK1 (778 aa).

The segment covering 1–12 has biased composition (gly residues); it reads MSSGAKEGGGGS. The segment at 1 to 29 is disordered; sequence MSSGAKEGGGGSPAYHLPHPHPHPPQHAQ. The Protein kinase domain maps to 34–285; that stretch reads YRLEKTLGKG…LEQIQKHPWY (252 aa). Residues 40-48 and Lys63 contribute to the ATP site; that span reads LGKGQTGLV. The Proton acceptor role is filled by Asp156. Residue Thr189 is modified to Phosphothreonine; by LKB1. The region spanning 314–356 is the UBA domain; that stretch reads ELDPDVLESMASLGCFRDRERLHRELRSEEENQEKMIYYLLLD. Positions 362 to 383 are enriched in basic and acidic residues; that stretch reads PSCEDQDLPPRNDVDPPRKRVD. Positions 362 to 548 are disordered; it reads PSCEDQDLPP…SPGGGVGGAA (187 aa). A phosphoserine mark is found at Ser399, Ser443, Ser447, and Ser450. The span at 430 to 457 shows a compositional bias: low complexity; sequence SRSVSGASTGLSSSPLSSPRSPVFSFSP. An omega-N-methylarginine mark is found at Arg466, Arg481, Arg484, and Arg498. Pro residues predominate over residues 491-508; sequence QPPPPSARSTPLPGPPGS. Position 508 is a phosphoserine (Ser508). Low complexity predominate over residues 509–533; sequence PRSSGGTPLHSPLHTPRASPTGTPG. An Omega-N-methylarginine modification is found at Arg525. 2 positions are modified to phosphothreonine: Thr529 and Thr535. An Omega-N-methylarginine modification is found at Arg550. At Thr583 the chain carries Phosphothreonine. Ser586, Ser587, and Ser601 each carry phosphoserine. Residues 719 to 778 are disordered; the sequence is QPSVQALADEKNGAQTRPAGAPPRSLQPPPGRPDPELSSSPRRGPPKDKKLLATNGTPLP.

This sequence belongs to the protein kinase superfamily. CAMK Ser/Thr protein kinase family. SNF1 subfamily. The cofactor is Mg(2+). Post-translationally, phosphorylated at Thr-189 by STK11/LKB1 in complex with STE20-related adapter-alpha (STRADA) pseudo kinase and CAB39. Not phosphorylated at Thr-189 by CaMKK2. In contrast, it is phosphorylated and activated by CaMKK1. May be inactivated via dephosphorylation of Thr-189 by PP2C. As to expression, widely expressed, with highest levels in brain and testis. Protein levels remain constant throughout the cell cycle.

The protein localises to the cytoplasm. It localises to the nucleus. Its subcellular location is the cytoskeleton. The protein resides in the microtubule organizing center. It is found in the centrosome. The protein localises to the synapse. It localises to the presynaptic active zone. Its subcellular location is the cytoplasmic vesicle. The protein resides in the secretory vesicle. It is found in the synaptic vesicle. The enzyme catalyses L-seryl-[protein] + ATP = O-phospho-L-seryl-[protein] + ADP + H(+). It carries out the reaction L-threonyl-[protein] + ATP = O-phospho-L-threonyl-[protein] + ADP + H(+). It catalyses the reaction L-seryl-[tau protein] + ATP = O-phospho-L-seryl-[tau protein] + ADP + H(+). The catalysed reaction is L-threonyl-[tau protein] + ATP = O-phospho-L-threonyl-[tau protein] + ADP + H(+). Activated by phosphorylation on Thr-189 by STK11/LKB1. Serine/threonine-protein kinase that plays a key role in polarization of neurons and centrosome duplication. Phosphorylates CDC25B, CDC25C, MAPT/TAU, RIMS1, TUBG1, TUBG2 and WEE1. Following phosphorylation and activation by STK11/LKB1, acts as a key regulator of polarization of cortical neurons, probably by mediating phosphorylation of microtubule-associated proteins such as MAPT/TAU at 'Thr-529' and 'Ser-579'. Also regulates neuron polarization by mediating phosphorylation of WEE1 at 'Ser-642' in postmitotic neurons, leading to down-regulate WEE1 activity in polarized neurons. In neurons, localizes to synaptic vesicles and plays a role in neurotransmitter release, possibly by phosphorylating RIMS1. Also acts as a positive regulator of centrosome duplication by mediating phosphorylation of gamma-tubulin (TUBG1 and TUBG2) at 'Ser-131', leading to translocation of gamma-tubulin and its associated proteins to the centrosome. Involved in the UV-induced DNA damage checkpoint response, probably by inhibiting CDK1 activity through phosphorylation and activation of WEE1, and inhibition of CDC25B and CDC25C. This is Serine/threonine-protein kinase BRSK1 (BRSK1) from Homo sapiens (Human).